The following is a 229-amino-acid chain: MGNASFGSKEQKLLKRLRLLPALLILRAFKPHRKIRDYRVVVVGTAGVGKSTLLHKWASGNFRHEYLPTIENTYCQLLGCSHGVLSLHITDSKSGDGNRALQRHVIARGHAFVLVYSVTKKETLEELKAFYELICKIKGNNLHKFPIVLVGNKSDDTHREVALNDGATCAMEWNCAFMEISAKTDVNVQELFHMLLNYKKKPTTGLQEPEKKSQMPNTTEKLLDKCIIM.

GTP contacts are provided by residues 44–51 (GTAGVGKS), 63–69 (RHEYLPT), 91–95 (DSKSG), 152–155 (NKSD), and 182–183 (AK). An Effector region motif is present at residues 66-74 (YLPTIENTY). Cys226 bears the Cysteine methyl ester mark. The S-geranylgeranyl cysteine moiety is linked to residue Cys226. A propeptide spans 227 to 229 (IIM) (removed in mature form).

This sequence belongs to the small GTPase superfamily. Di-Ras family. In terms of tissue distribution, expressed in normal ovarian and breast epithelial cells but not in ovarian and breast cancers.

It is found in the cell membrane. The sequence is that of GTP-binding protein Di-Ras3 (DIRAS3) from Homo sapiens (Human).